The primary structure comprises 283 residues: Thymidylate synthase (283 aa).

Arg22 is a dUMP binding site. Cys160 acts as the Nucleophile in catalysis. Residues 180 to 183 (RSCD), Asn191, and 221 to 223 (HIY) each bind dUMP. Asp183 is a (6R)-5,10-methylene-5,6,7,8-tetrahydrofolate binding site. Ser282 is a binding site for (6R)-5,10-methylene-5,6,7,8-tetrahydrofolate.

Belongs to the thymidylate synthase family. Bacterial-type ThyA subfamily. As to quaternary structure, homodimer.

It localises to the cytoplasm. The catalysed reaction is dUMP + (6R)-5,10-methylene-5,6,7,8-tetrahydrofolate = 7,8-dihydrofolate + dTMP. It participates in pyrimidine metabolism; dTTP biosynthesis. Functionally, catalyzes the reductive methylation of 2'-deoxyuridine-5'-monophosphate (dUMP) to 2'-deoxythymidine-5'-monophosphate (dTMP) while utilizing 5,10-methylenetetrahydrofolate (mTHF) as the methyl donor and reductant in the reaction, yielding dihydrofolate (DHF) as a by-product. This enzymatic reaction provides an intracellular de novo source of dTMP, an essential precursor for DNA biosynthesis. The sequence is that of Thymidylate synthase from Pseudoalteromonas translucida (strain TAC 125).